A 566-amino-acid polypeptide reads, in one-letter code: Urease subunit alpha (566 aa).

Residues 128–566 (GGVDTHIHFI…LPMAQRYFLF (439 aa)) form the Urease domain. The Ni(2+) site is built by His-133, His-135, and Lys-216. The residue at position 216 (Lys-216) is an N6-carboxylysine. His-218 lines the substrate pocket. 2 residues coordinate Ni(2+): His-245 and His-271. The Proton donor role is filled by His-319. Asp-359 is a binding site for Ni(2+).

It belongs to the metallo-dependent hydrolases superfamily. Urease alpha subunit family. As to quaternary structure, may form a heterohexamer of 3 UreC (alpha) and 3 UreAB (gamma/beta) subunits. May also form a heterotrimer of UreA (gamma), UreB (beta) and UreC (alpha) subunits. Three heterotrimers associate to form the active enzyme. Ni cation serves as cofactor. Post-translationally, carboxylation allows a single lysine to coordinate two nickel ions.

The protein resides in the cytoplasm. It carries out the reaction urea + 2 H2O + H(+) = hydrogencarbonate + 2 NH4(+). It functions in the pathway nitrogen metabolism; urea degradation; CO(2) and NH(3) from urea (urease route): step 1/1. The protein is Urease subunit alpha of Pseudomonas savastanoi pv. phaseolicola (strain 1448A / Race 6) (Pseudomonas syringae pv. phaseolicola (strain 1448A / Race 6)).